A 379-amino-acid polypeptide reads, in one-letter code: UDP-4-amino-4-deoxy-L-arabinose--oxoglutarate aminotransferase (379 aa).

An N6-(pyridoxal phosphate)lysine modification is found at Lys182.

This sequence belongs to the DegT/DnrJ/EryC1 family. ArnB subfamily. Homodimer. It depends on pyridoxal 5'-phosphate as a cofactor.

The catalysed reaction is UDP-4-amino-4-deoxy-beta-L-arabinose + 2-oxoglutarate = UDP-beta-L-threo-pentopyranos-4-ulose + L-glutamate. Its pathway is nucleotide-sugar biosynthesis; UDP-4-deoxy-4-formamido-beta-L-arabinose biosynthesis; UDP-4-deoxy-4-formamido-beta-L-arabinose from UDP-alpha-D-glucuronate: step 2/3. The protein operates within bacterial outer membrane biogenesis; lipopolysaccharide biosynthesis. Catalyzes the conversion of UDP-4-keto-arabinose (UDP-Ara4O) to UDP-4-amino-4-deoxy-L-arabinose (UDP-L-Ara4N). The modified arabinose is attached to lipid A and is required for resistance to polymyxin and cationic antimicrobial peptides. In Escherichia coli O157:H7, this protein is UDP-4-amino-4-deoxy-L-arabinose--oxoglutarate aminotransferase.